The chain runs to 1053 residues: Integrin alpha-3 (1053 aa).

Residues 1–32 (MGPGPCRVPRAPGWLLRALALMVAACGRVAFA) form the signal peptide. Topologically, residues 33–993 (FNLDTRFLVV…LVEELPAEIE (961 aa)) are extracellular. FG-GAP repeat units lie at residues 38–103 (RFLV…KDDC), 110–171 (EKSD…DLQL), 185–235 (CNSN…WDLS), 236–293 (EYSY…GGDL), 294–355 (QRKQ…ASFP), 357–412 (QPSL…GLLR), and 416–478 (QIIH…VARP). The N-linked (GlcNAc...) asparagine glycan is linked to Asn86. Intrachain disulfides connect Cys94–Cys103, Cys140–Cys162, and Cys185–Cys197. Cystine bridges form between Cys486–Cys491 and Cys497–Cys551. Residues Asn501, Asn512, Asn574, and Asn606 are each glycosylated (N-linked (GlcNAc...) asparagine). A disulfide bond links Cys616 and Cys622. Asn657, Asn699, Asn843, and Asn859 each carry an N-linked (GlcNAc...) asparagine glycan. Cys695 and Cys704 are disulfide-bonded. Intrachain disulfides connect Cys848–Cys906 and Cys913–Cys918. The disordered stretch occupies residues 865–890 (PGVTPLSPQRRRRQLDPGGDQSSPPV). N-linked (GlcNAc...) asparagine glycosylation is found at Asn925, Asn928, Asn937, and Asn971. The helical transmembrane segment at 994–1021 (LWLVLVAVGAGLLLLGLIILLLWKCGFF) threads the bilayer. Cys1018 carries S-palmitoyl cysteine lipidation. Over 1022–1053 (KRARTRALYEAKRQKAEMKSQPSETERLTDDY) the chain is Cytoplasmic.

Belongs to the integrin alpha chain family. Heterodimer of an alpha and a beta subunit. The alpha subunit is composed of a heavy and a light chain linked by a disulfide bond. Alpha-3 associates with beta-1. Interacts with HPS5. Interacts with FAP (seprase); the interaction occurs at the cell surface of invadopodia membrane in a collagen-dependent manner. Isoform 1 and isoform 2 are expressed in heart and brain. Only isoform 1 is detected in lung.

It is found in the cell membrane. The protein localises to the cell projection. It localises to the invadopodium membrane. Its subcellular location is the filopodium membrane. Integrin alpha-3/beta-1 is a receptor for fibronectin, laminin, collagen, epiligrin, thrombospondin and CSPG4. Integrin alpha-3/beta-1 provides a docking site for FAP (seprase) at invadopodia plasma membranes in a collagen-dependent manner and hence may participate in the adhesion, formation of invadopodia and matrix degradation processes, promoting cell invasion. Alpha-3/beta-1 may mediate with LGALS3 the stimulation by CSPG4 of endothelial cells migration. This is Integrin alpha-3 (Itga3) from Mus musculus (Mouse).